Consider the following 690-residue polypeptide: DNA ligase (690 aa).

Residues 36–40 (DSVYD), 85–86 (SL), and Glu124 contribute to the NAD(+) site. Lys126 acts as the N6-AMP-lysine intermediate in catalysis. Residues Arg147, Glu184, Lys308, and Lys332 each contribute to the NAD(+) site. Residues Cys426, Cys429, Cys444, and Cys449 each coordinate Zn(2+). The region spanning 614–690 (NQSNVFDGKS…INENELKLLL (77 aa)) is the BRCT domain.

Belongs to the NAD-dependent DNA ligase family. LigA subfamily. The cofactor is Mg(2+). Mn(2+) serves as cofactor.

It catalyses the reaction NAD(+) + (deoxyribonucleotide)n-3'-hydroxyl + 5'-phospho-(deoxyribonucleotide)m = (deoxyribonucleotide)n+m + AMP + beta-nicotinamide D-nucleotide.. In terms of biological role, DNA ligase that catalyzes the formation of phosphodiester linkages between 5'-phosphoryl and 3'-hydroxyl groups in double-stranded DNA using NAD as a coenzyme and as the energy source for the reaction. It is essential for DNA replication and repair of damaged DNA. In Prochlorococcus marinus (strain NATL2A), this protein is DNA ligase.